The chain runs to 1728 residues: Hybrid PKS-NRPS synthetase TAS1 (1728 aa).

The interval 153-499 (SPLSKAQMAL…MDPTLLDFKV (347 aa)) is condensation (C) domain. Residues 608 to 1002 (KARAASQPDL…KLHIQGRIGN (395 aa)) are adenylation (A) domain. The 79-residue stretch at 1141-1219 (MLRRHLTAEV…KQVDCLMGIV (79 aa)) folds into the Carrier domain. At serine 1177 the chain carries O-(pantetheine 4'-phosphoryl)serine. Residues 1225–1256 (LGSEPTGGSSSRSQSRRSAETSSSSTSAPSSV) are disordered. Composition is skewed to low complexity over residues 1226–1237 (GSEPTGGSSSRS) and 1244–1255 (ETSSSSTSAPSS). Residues 1262 to 1714 (RNLYAIVGIS…SDATWFVIST (453 aa)) enclose the Ketosynthase family 3 (KS3) domain. Residues cysteine 1436, histidine 1579, and asparagine 1633 each act as for beta-ketoacyl synthase activity in the active site.

In the N-terminal section; belongs to the NRP synthetase family. The cofactor is pantetheine 4'-phosphate.

The enzyme catalyses acetoacetyl-CoA + L-isoleucine + ATP = tenuazonic acid + AMP + diphosphate + CoA + 2 H(+). Hybrid PKS-NRPS synthetase that mediates the biosynthesis of the toxin tenuazonic acid (TeA), an inhibitor of protein biosynthesis on ribosomes by suppressing the release of new protein. TAS1 alone is sufficient for TeA synthesis via the condensation of isoleucine (Ile) with acetoacetyl-CoA by the N-terminal NRPS module and subsequent cyclization conducted by the C-terminal KS domain. This Pyricularia oryzae (strain 70-15 / ATCC MYA-4617 / FGSC 8958) (Rice blast fungus) protein is Hybrid PKS-NRPS synthetase TAS1.